The sequence spans 396 residues: Tryptophan synthase beta chain (396 aa).

Residue lysine 86 is modified to N6-(pyridoxal phosphate)lysine.

It belongs to the TrpB family. As to quaternary structure, tetramer of two alpha and two beta chains. Pyridoxal 5'-phosphate is required as a cofactor.

It catalyses the reaction (1S,2R)-1-C-(indol-3-yl)glycerol 3-phosphate + L-serine = D-glyceraldehyde 3-phosphate + L-tryptophan + H2O. It participates in amino-acid biosynthesis; L-tryptophan biosynthesis; L-tryptophan from chorismate: step 5/5. Its function is as follows. The beta subunit is responsible for the synthesis of L-tryptophan from indole and L-serine. This is Tryptophan synthase beta chain from Vibrio campbellii (strain ATCC BAA-1116).